The following is a 153-amino-acid chain: Ribonuclease H (153 aa).

Residues 1–142 form the RNase H type-1 domain; that stretch reads MLKTIKIFSD…CDHLARESAK (142 aa). The Mg(2+) site is built by Asp-10, Glu-48, Asp-70, and Asp-134.

This sequence belongs to the RNase H family. In terms of assembly, monomer. Mg(2+) is required as a cofactor.

It localises to the cytoplasm. The enzyme catalyses Endonucleolytic cleavage to 5'-phosphomonoester.. Its function is as follows. Endonuclease that specifically degrades the RNA of RNA-DNA hybrids. In Buchnera aphidicola subsp. Baizongia pistaciae (strain Bp), this protein is Ribonuclease H.